Here is a 269-residue protein sequence, read N- to C-terminus: 2-dehydro-3-deoxyphosphooctonate aldolase (269 aa).

This sequence belongs to the KdsA family.

The protein resides in the cytoplasm. The enzyme catalyses D-arabinose 5-phosphate + phosphoenolpyruvate + H2O = 3-deoxy-alpha-D-manno-2-octulosonate-8-phosphate + phosphate. It functions in the pathway carbohydrate biosynthesis; 3-deoxy-D-manno-octulosonate biosynthesis; 3-deoxy-D-manno-octulosonate from D-ribulose 5-phosphate: step 2/3. The protein operates within bacterial outer membrane biogenesis; lipopolysaccharide biosynthesis. The sequence is that of 2-dehydro-3-deoxyphosphooctonate aldolase from Chlamydia caviae (strain ATCC VR-813 / DSM 19441 / 03DC25 / GPIC) (Chlamydophila caviae).